Reading from the N-terminus, the 61-residue chain is Small ribosomal subunit protein uS14 (61 aa).

Cys-24, Cys-27, Cys-40, and Cys-43 together coordinate Zn(2+).

Belongs to the universal ribosomal protein uS14 family. Zinc-binding uS14 subfamily. Part of the 30S ribosomal subunit. Contacts proteins S3 and S10. It depends on Zn(2+) as a cofactor.

Binds 16S rRNA, required for the assembly of 30S particles and may also be responsible for determining the conformation of the 16S rRNA at the A site. The polypeptide is Small ribosomal subunit protein uS14 (Desulfotalea psychrophila (strain LSv54 / DSM 12343)).